The primary structure comprises 851 residues: DEAD-box ATP-dependent RNA helicase 29 (851 aa).

The interval 1 to 49 (MARLNPSKPSSRGGKPRSSSADAMAEHKPPPGRPKREGEGASKKKAKSG) is disordered. Positions 7 to 20 (SKPSSRGGKPRSSS) are enriched in low complexity. The span at 24 to 42 (MAEHKPPPGRPKREGEGAS) shows a compositional bias: basic and acidic residues. The Q motif motif lies at 49–77 (GGFESMGLCEEVYRGVRHKGYRVPTPIQR). The Helicase ATP-binding domain occupies 80–253 (MPLILAGHDI…KAGLRDPQIV (174 aa)). 93 to 100 (ARTGSGKT) is a binding site for ATP. The DEAD box motif lies at 201-204 (DEAD). Residues 277-426 (KLAALLYLVR…PAPTEEELLK (150 aa)) form the Helicase C-terminal domain. Residues 702–851 (KWQQKTHRSI…KGKMKGKGTR (150 aa)) are disordered. Positions 733-746 (RGNRKHTAAGRGRR) are enriched in basic residues. Basic and acidic residues-rich tracts occupy residues 773–787 (DIAR…ESKF) and 796–825 (RHDG…DGNG). Positions 841–851 (GKGKMKGKGTR) are enriched in basic residues.

This sequence belongs to the DEAD box helicase family. DDX54/DBP10 subfamily.

The catalysed reaction is ATP + H2O = ADP + phosphate + H(+). In Oryza sativa subsp. indica (Rice), this protein is DEAD-box ATP-dependent RNA helicase 29.